The sequence spans 364 residues: Aminomethyltransferase (364 aa).

Belongs to the GcvT family. As to quaternary structure, the glycine cleavage system is composed of four proteins: P, T, L and H.

It carries out the reaction N(6)-[(R)-S(8)-aminomethyldihydrolipoyl]-L-lysyl-[protein] + (6S)-5,6,7,8-tetrahydrofolate = N(6)-[(R)-dihydrolipoyl]-L-lysyl-[protein] + (6R)-5,10-methylene-5,6,7,8-tetrahydrofolate + NH4(+). In terms of biological role, the glycine cleavage system catalyzes the degradation of glycine. The polypeptide is Aminomethyltransferase (Staphylococcus carnosus (strain TM300)).